Here is a 646-residue protein sequence, read N- to C-terminus: MLRIPSRIGSRQVLACAGRNLKCGSVMRHISRRNISKEPEKVYTNLADVNDPKRDQFFKYTWGTWLQNDKLEKDKRTTKFSLNGLNSVLDDIYRQATKNTKDNFKSETEIVPQPLTNKNRTVSMPNNIAITKLGTLNPNEKSVTIKTIASVHEGKHHRIYKVQTNLSDEKSFVLRIPYQLDDDKATISHRIRSEVATLDFLDLQLKMKVPKVICYAADDGNPLGVPFILQEYIDGSLLMKDWNPLMDDKALMVETGEGSTENPELASLNKVVKSMADFHAKLNSISFNAAGSIYFKNDSNLNSETVIDNISNDLASNLKDRWVLGPSVERRLWKKKSDLAIEERLKYLGPWKEDKETSISAQILRDTAILELKNAEARLAKSEQNGSKDKNTETLIKKQIETFQNVEKISGDLISSEMKAIPNIKDLLKPTIFHPDLDPMNVLIENKTETPFMLDLEGAVVKPFILQSSPQFVAYDGPKIYNMKSDIPEFEKLSEEERKHYEFMYKRTRNQFLWEKAVNERLPNLIMTVAPPVKVLRRPYTAVLEQKTDNDYILVDDSFFQLREAWAFFFKNGLVTKEEFPLTFTDEQVKQHADDLNSLHEKLVSTPFAATQGWVPQDMFDNLVRAGVIIKDSTGNFTVNDINPSA.

A mitochondrion-targeting transit peptide spans 1-34 (MLRIPSRIGSRQVLACAGRNLKCGSVMRHISRRN).

It belongs to the AIM9 family.

It localises to the mitochondrion. This is Altered inheritance of mitochondria protein 9, mitochondrial (AIM9) from Candida glabrata (strain ATCC 2001 / BCRC 20586 / JCM 3761 / NBRC 0622 / NRRL Y-65 / CBS 138) (Yeast).